A 306-amino-acid polypeptide reads, in one-letter code: Replication termination factor 2 (306 aa).

The interval 192–306 is disordered; it reads RAKLEKKTKK…HWVTHTSYCF (115 aa). Residues 226 to 240 are compositionally biased toward basic and acidic residues; it reads GKSEEADPDPREKKS. Ser-287 carries the phosphoserine modification.

It belongs to the rtf2 family. As to quaternary structure, interacts with DDI2; probably also interacts with DDI1. Post-translationally, undergoes proteasomal degradation, via DDI1 and DDI2. Removal from stalled replisomes and degradation are required for genome stability.

The protein resides in the chromosome. Replication termination factor which is a component of the elongating replisome. Required for ATR pathway signaling upon DNA damage and has a positive activity during DNA replication. Might function to facilitate fork pausing at replication fork barriers like the rDNA. May be globally required to stimulate ATR signaling after the fork stalls or encounters a lesion. Interacts with nascent DNA. The sequence is that of Replication termination factor 2 from Rattus norvegicus (Rat).